A 286-amino-acid polypeptide reads, in one-letter code: 4-hydroxybenzoate octaprenyltransferase (286 aa).

A run of 7 helical transmembrane segments spans residues 21 to 40, 95 to 115, 142 to 162, 167 to 187, 211 to 231, 235 to 255, and 266 to 286; these read GTLL…AGGM, ILFV…NGLV, FLGV…TGEV, WWLF…YAMV, IIGL…WSAE, LYGL…MLIF, and FLNN…DYLI.

This sequence belongs to the UbiA prenyltransferase family. Requires Mg(2+) as cofactor.

The protein localises to the cell inner membrane. It catalyses the reaction all-trans-octaprenyl diphosphate + 4-hydroxybenzoate = 4-hydroxy-3-(all-trans-octaprenyl)benzoate + diphosphate. It functions in the pathway cofactor biosynthesis; ubiquinone biosynthesis. In terms of biological role, catalyzes the prenylation of para-hydroxybenzoate (PHB) with an all-trans polyprenyl group. Mediates the second step in the final reaction sequence of ubiquinone-8 (UQ-8) biosynthesis, which is the condensation of the polyisoprenoid side chain with PHB, generating the first membrane-bound Q intermediate 3-octaprenyl-4-hydroxybenzoate. The polypeptide is 4-hydroxybenzoate octaprenyltransferase (Shewanella putrefaciens (strain CN-32 / ATCC BAA-453)).